We begin with the raw amino-acid sequence, 288 residues long: MESNADWGSRGGLPQAFLTPGISSFSEFLKGFAPEYLPSGRPLPGGLGSASAAGDIAPHGTTIVSIAFPGGVLLAGDRRATMGNFIAQRDIEKVFPADEFSAVGIAGSAGLAVEVVRLFQLELEHYEKIEGVTLSTDGKANRLATMIRGNLAMAMQGLAVVPLFAGYDEETGQGRIFSYDVTGGMYEEHDFYSVGSGSMFARGALKKLFRPDFTAEDAAVAAVQALYDAADDDSATGGPDLFRKIFPVVAVVTEDGYRRLPDEELSTLVESIMDARRVVPDGPRSPLR.

A propeptide spans 1–60 (removed in mature form; by autocatalysis); the sequence is MESNADWGSRGGLPQAFLTPGISSFSEFLKGFAPEYLPSGRPLPGGLGSASAAGDIAPHG. Thr61 acts as the Nucleophile in catalysis.

This sequence belongs to the peptidase T1B family. In terms of assembly, the 20S proteasome core is composed of 14 alpha and 14 beta subunits that assemble into four stacked heptameric rings, resulting in a barrel-shaped structure. The two inner rings, each composed of seven catalytic beta subunits, are sandwiched by two outer rings, each composed of seven alpha subunits. The catalytic chamber with the active sites is on the inside of the barrel. Has a gated structure, the ends of the cylinder being occluded by the N-termini of the alpha-subunits. Is capped by the proteasome-associated ATPase, ARC.

It is found in the cytoplasm. The enzyme catalyses Cleavage of peptide bonds with very broad specificity.. Its pathway is protein degradation; proteasomal Pup-dependent pathway. The formation of the proteasomal ATPase ARC-20S proteasome complex, likely via the docking of the C-termini of ARC into the intersubunit pockets in the alpha-rings, may trigger opening of the gate for substrate entry. Interconversion between the open-gate and close-gate conformations leads to a dynamic regulation of the 20S proteasome proteolysis activity. In terms of biological role, component of the proteasome core, a large protease complex with broad specificity involved in protein degradation. The protein is Proteasome subunit beta of Catenulispora acidiphila (strain DSM 44928 / JCM 14897 / NBRC 102108 / NRRL B-24433 / ID139908).